Here is a 420-residue protein sequence, read N- to C-terminus: Mitochondrial chaperone BCS1 (420 aa).

The Mitochondrial intermembrane segment spans residues 1-15; the sequence is MTLSDFIGALKDNPY. A helical membrane pass occupies residues 16–32; the sequence is FGAGFGLVGVGTALAVA. Residues 33–420 lie on the Mitochondrial matrix side of the membrane; that stretch reads RKGAQVGMIF…AIKNIAEIKD (388 aa). 230–237 contacts ATP; the sequence is GPPGCGKS.

It belongs to the AAA ATPase family. BCS1 subfamily.

It is found in the mitochondrion inner membrane. The enzyme catalyses ATP + H2O = ADP + phosphate + H(+). In terms of biological role, chaperone necessary for the incorporation of Rieske iron-sulfur protein uqcrfs1 into the mitochondrial respiratory chain complex III. The chain is Mitochondrial chaperone BCS1 (bcs1l) from Danio rerio (Zebrafish).